The primary structure comprises 118 residues: Non-specific lipid-transfer protein 1 (118 aa).

The signal sequence occupies residues Met-1–Ala-25. Cystine bridges form between Cys-29–Cys-76, Cys-39–Cys-53, Cys-54–Cys-99, and Cys-74–Cys-113.

It belongs to the plant LTP family.

Functionally, plant non-specific lipid-transfer proteins transfer phospholipids as well as galactolipids across membranes. May play a role in wax or cutin deposition in the cell walls of expanding epidermal cells and certain secretory tissues. The chain is Non-specific lipid-transfer protein 1 from Lens culinaris (Lentil).